A 335-amino-acid polypeptide reads, in one-letter code: Nucleoid-associated protein PC1_1634 (335 aa).

The protein belongs to the YejK family.

The protein localises to the cytoplasm. It is found in the nucleoid. This is Nucleoid-associated protein PC1_1634 from Pectobacterium carotovorum subsp. carotovorum (strain PC1).